The sequence spans 465 residues: Cysteine--tRNA ligase (465 aa).

Cysteine 29 lines the Zn(2+) pocket. Positions 31–41 (PTVYNYIHIGN) match the 'HIGH' region motif. Residues cysteine 209, histidine 234, and glutamate 238 each contribute to the Zn(2+) site. Positions 266 to 270 (KMSKS) match the 'KMSKS' region motif. Lysine 269 lines the ATP pocket. Residue serine 270 is modified to Phosphoserine.

Belongs to the class-I aminoacyl-tRNA synthetase family. Monomer. Zn(2+) serves as cofactor.

The protein resides in the cytoplasm. It carries out the reaction tRNA(Cys) + L-cysteine + ATP = L-cysteinyl-tRNA(Cys) + AMP + diphosphate. The sequence is that of Cysteine--tRNA ligase from Bacillus cytotoxicus (strain DSM 22905 / CIP 110041 / 391-98 / NVH 391-98).